A 273-amino-acid chain; its full sequence is Thiazole synthase (273 aa).

K111 functions as the Schiff-base intermediate with DXP in the catalytic mechanism. 1-deoxy-D-xylulose 5-phosphate is bound by residues G172, 198–199, and 220–221; these read AG and NS. The segment at 251–273 is disordered; that stretch reads RLPRRGQASASSPTTGLISGKDK. Polar residues predominate over residues 258–267; the sequence is ASASSPTTGL.

This sequence belongs to the ThiG family. In terms of assembly, homotetramer. Forms heterodimers with either ThiH or ThiS.

It localises to the cytoplasm. The catalysed reaction is [ThiS sulfur-carrier protein]-C-terminal-Gly-aminoethanethioate + 2-iminoacetate + 1-deoxy-D-xylulose 5-phosphate = [ThiS sulfur-carrier protein]-C-terminal Gly-Gly + 2-[(2R,5Z)-2-carboxy-4-methylthiazol-5(2H)-ylidene]ethyl phosphate + 2 H2O + H(+). Its pathway is cofactor biosynthesis; thiamine diphosphate biosynthesis. Catalyzes the rearrangement of 1-deoxy-D-xylulose 5-phosphate (DXP) to produce the thiazole phosphate moiety of thiamine. Sulfur is provided by the thiocarboxylate moiety of the carrier protein ThiS. In vitro, sulfur can be provided by H(2)S. The protein is Thiazole synthase of Synechococcus sp. (strain CC9902).